Here is a 100-residue protein sequence, read N- to C-terminus: CCAAT/enhancer-binding protein homolog 2 (100 aa).

2 disordered regions span residues 1 to 60 and 79 to 100; these read MSGN…ETLE and AYAKNDGNDGPPPPPPPSSSAV. The bZIP domain maps to 17–80; it reads EDDYSTKRKR…SFLKEMFMAY (64 aa). Positions 23 to 48 are basic motif; the sequence is KRKRNNEAVNRTRQKKRQEENDTAEK. The stretch at 24–83 forms a coiled coil; that stretch reads RKRNNEAVNRTRQKKRQEENDTAEKVDELKKENETLERKVEQLQKELSFLKEMFMAYAKN. Residues 39–60 are compositionally biased toward basic and acidic residues; it reads RQEENDTAEKVDELKKENETLE. The tract at residues 52 to 73 is leucine-zipper; it reads LKKENETLERKVEQLQKELSFL. A compositionally biased stretch (pro residues) spans 88–100; the sequence is GPPPPPPPSSSAV.

This sequence belongs to the bZIP family. C/EBP subfamily. Interacts with transcription factor zip-11. In terms of tissue distribution, expressed broadly in somatic tissues including the intestine.

The protein resides in the nucleus. Functionally, transcription factor that binds to the promoter and the enhancer regions of target genes. Regulates expression of genes involved in fat metabolism, including ech-1.1 and fat-5. Has a protective role in response to infection by the Gram-negative bacterium P.aeruginosa. Required for the activation of infection response gene irg-1 following P.aeruginosa infection. Required to prevent P.aeruginosa ToxA-mediated lethality. May also function in concert with transcription factor zip-11 to mediate immune responses, independently of the pmk-1/p38 MAPK pathway. May act together with the bZIP transcription factor, zip-2. The sequence is that of CCAAT/enhancer-binding protein homolog 2 from Caenorhabditis elegans.